Consider the following 217-residue polypeptide: Large ribosomal subunit protein uL4 (217 aa).

Residues 46-103 (KRQGTHATKTRGMVSGGGRKPFRQKGTGRARQGSIRAPHFTGGGTVHGPQPRDYSQRT) are disordered.

The protein belongs to the universal ribosomal protein uL4 family. In terms of assembly, part of the 50S ribosomal subunit.

In terms of biological role, one of the primary rRNA binding proteins, this protein initially binds near the 5'-end of the 23S rRNA. It is important during the early stages of 50S assembly. It makes multiple contacts with different domains of the 23S rRNA in the assembled 50S subunit and ribosome. Its function is as follows. Forms part of the polypeptide exit tunnel. The chain is Large ribosomal subunit protein uL4 from Corynebacterium jeikeium (strain K411).